The chain runs to 131 residues: Small ribosomal subunit protein bS6 (131 aa).

The interval 98–131 (EASPMVKAKDERRERRDDFANETADDADAGDSEE) is disordered. Over residues 104 to 116 (KAKDERRERRDDF) the composition is skewed to basic and acidic residues. Acidic residues predominate over residues 120 to 131 (TADDADAGDSEE).

The protein belongs to the bacterial ribosomal protein bS6 family.

Binds together with bS18 to 16S ribosomal RNA. This Citrobacter koseri (strain ATCC BAA-895 / CDC 4225-83 / SGSC4696) protein is Small ribosomal subunit protein bS6.